A 734-amino-acid polypeptide reads, in one-letter code: E3 ubiquitin-protein ligase TRIM56 (734 aa).

Residues 21–60 form an RING-type zinc finger; sequence CKICLEQLHTPKTLPCLHTYCQDCLAQLDIGGQVRCPECR. B box-type zinc fingers lie at residues 98–149 and 164–205; these read KPTC…VVDL and RQAS…CLPL. Zn(2+) contacts are provided by cysteine 169, histidine 172, cysteine 192, and histidine 197. Positions 215–303 form a coiled coil; it reads GLEELLAGVD…KIERQEQVAK (89 aa). A compositionally biased stretch (basic and acidic residues) spans 372 to 381; it reads EPKQSPKDSG. A disordered region spans residues 372–463; the sequence is EPKQSPKDSG…SPILRPNLEG (92 aa). Positions 435 to 448 are enriched in basic residues; sequence RPNKKKKCKGRGKS. Phosphoserine is present on serine 454.

The protein belongs to the TRIM/RBCC family. Interacts with STING1. Interacts with TICAM1.

It localises to the cytoplasm. The enzyme catalyses S-ubiquitinyl-[E2 ubiquitin-conjugating enzyme]-L-cysteine + [acceptor protein]-L-lysine = [E2 ubiquitin-conjugating enzyme]-L-cysteine + N(6)-ubiquitinyl-[acceptor protein]-L-lysine.. The protein operates within protein modification; protein ubiquitination. Functionally, E3 ubiquitin-protein ligase that plays a key role in innate antiviral immunity by mediating ubiquitination of CGAS and STING1. In response to pathogen- and host-derived double-stranded DNA (dsDNA), targets STING1 to 'Lys-63'-linked ubiquitination, thereby promoting its homodimerization, a step required for the production of type I interferon IFN-beta. Also mediates monoubiquitination of CGAS, thereby promoting CGAS oligomerization and subsequent activation. Independently of its E3 ubiquitin ligase activity, positive regulator of TLR3 signaling. Potentiates extracellular double stranded RNA (dsRNA)-induced expression of IFNB1 and interferon-stimulated genes ISG15, IFIT1/ISG56, CXCL10, OASL and CCL5/RANTES. This is E3 ubiquitin-protein ligase TRIM56 from Mus musculus (Mouse).